A 453-amino-acid chain; its full sequence is MYQRALLFSALATAVSAQQVGTQKAEVHPALTWQKCTAAGSCTDQKGSVVIDANWRWLHSTEDTTNCYTGNEWNAELCPDNEACAKNCALDGADYSGTYGVTADGSSLKLNFVTSANVGSRLYLMEDDETYQMFNLLNNEFTFDVDVSNLPCGLNGALYFVSMDADGGLSKYPGNKAGAKYGTGYCDSQCPRDLKFINGEANVEGWKPSDNDKNAGVGGYGSCCPEMDIWEANSISTAYTPHPCDGMEQTRCDGNDCGGTYSSTRYAGTCDPDGCDFNSFRMGNESFYGPGGLVDTKSPITVVTQFVTAGGTDSGALKEIRRVYVQGGKVIGNSASNVAGVEGDSITSDFCTAQKKAFGDEDIFSKHGGLEGMGKALNKMALIVSIWDDHASSMMWLDSTYPVDADASTPGVARGTCEHGLGDPETVESQHPDASVTFSNIKFGPIGSTYKSV.

Positions 1–17 (MYQRALLFSALATAVSA) are cleaved as a signal peptide. Catalysis depends on Glu226, which acts as the Nucleophile. Residue Glu231 is the Proton donor of the active site. Asn284 carries N-linked (GlcNAc...) asparagine glycosylation.

Belongs to the glycosyl hydrolase 7 (cellulase C) family.

Its subcellular location is the secreted. It carries out the reaction Hydrolysis of (1-&gt;4)-beta-D-glucosidic linkages in cellulose and cellotetraose, releasing cellobiose from the non-reducing ends of the chains.. The biological conversion of cellulose to glucose generally requires three types of hydrolytic enzymes: (1) Endoglucanases which cut internal beta-1,4-glucosidic bonds; (2) Exocellobiohydrolases that cut the disaccharide cellobiose from the non-reducing end of the cellulose polymer chain; (3) Beta-1,4-glucosidases which hydrolyze the cellobiose and other short cello-oligosaccharides to glucose. The chain is Probable 1,4-beta-D-glucan cellobiohydrolase A (cbhA) from Aspergillus clavatus (strain ATCC 1007 / CBS 513.65 / DSM 816 / NCTC 3887 / NRRL 1 / QM 1276 / 107).